Here is a 169-residue protein sequence, read N- to C-terminus: Adenine phosphoribosyltransferase (169 aa).

This sequence belongs to the purine/pyrimidine phosphoribosyltransferase family. In terms of assembly, homodimer.

The protein localises to the cytoplasm. It carries out the reaction AMP + diphosphate = 5-phospho-alpha-D-ribose 1-diphosphate + adenine. It functions in the pathway purine metabolism; AMP biosynthesis via salvage pathway; AMP from adenine: step 1/1. Its function is as follows. Catalyzes a salvage reaction resulting in the formation of AMP, that is energically less costly than de novo synthesis. In Mycoplasmopsis synoviae (strain 53) (Mycoplasma synoviae), this protein is Adenine phosphoribosyltransferase.